The chain runs to 155 residues: 3-hydroxyacyl-[acyl-carrier-protein] dehydratase FabZ (155 aa).

Residue His-54 is part of the active site.

Belongs to the thioester dehydratase family. FabZ subfamily.

It localises to the cytoplasm. The enzyme catalyses a (3R)-hydroxyacyl-[ACP] = a (2E)-enoyl-[ACP] + H2O. Involved in unsaturated fatty acids biosynthesis. Catalyzes the dehydration of short chain beta-hydroxyacyl-ACPs and long chain saturated and unsaturated beta-hydroxyacyl-ACPs. This Burkholderia mallei (strain NCTC 10247) protein is 3-hydroxyacyl-[acyl-carrier-protein] dehydratase FabZ.